The chain runs to 341 residues: Acetylpolyamine amidohydrolase (341 aa).

Substrate contacts are provided by Y19, E106, and E117. H159 acts as the Proton donor/acceptor in catalysis. Zn(2+) is bound by residues D195, H197, and D284. Y323 serves as a coordination point for substrate.

The protein belongs to the histone deacetylase family. As to quaternary structure, homodimer. The cofactor is Zn(2+).

The enzyme catalyses N-acetylputrescine + H2O = putrescine + acetate. It carries out the reaction N-acetylcadaverine + H2O = cadaverine + acetate. It catalyses the reaction N(1)-acetylspermine + H2O = spermine + acetate. The catalysed reaction is N(1)-acetylspermidine + H2O = spermidine + acetate. The enzyme catalyses N(8)-acetylspermidine + H2O = spermidine + acetate. It participates in amine and polyamine metabolism. Zinc ions inhibit enzyme activity in a dose-dependent manner. Inhibited by KCl at concentrations above 10 mM. Inhibited by o-oxyquinoline in vitro, suggesting that it is a metalloprotein. Inhibited by various substrate N(8)-acetylspermidine analogs bearing different metal-binding groups such as trifluoromethylketone, thiol, or hydroxamate, and by hydroxamate analogs of short-chain acetyldiamines. Its function is as follows. Involved in polyamine metabolism. Catalyzes the deacetylation of various acetylated polyamines such as N-acetylputrescine, N-acetylcadaverine, N(1)-acetylspermine, N(1)-acetylspermidine and N(8)-acetylspermidine. In vitro, is also able to deacetylate L-Lys(epsilon-acetyl)coumarin, but has very low activity towards the larger tetrapeptide N-acetyl-L-Arg-L-His-L-Lys(epsilon-acetyl)-L-Lys(epsilon-acetyl)coumarin. This chain is Acetylpolyamine amidohydrolase, found in Mycoplana ramosa (Mycoplana bullata).